A 556-amino-acid polypeptide reads, in one-letter code: Vetispiradiene synthase 1 (556 aa).

Residues D309, D313, D452, T456, and E460 each coordinate Mg(2+). Positions 309–313 match the DDXXD motif motif; the sequence is DDTFD.

This sequence belongs to the terpene synthase family. Tpsa subfamily. Requires Mg(2+) as cofactor.

It is found in the cytoplasm. It catalyses the reaction (2E,6E)-farnesyl diphosphate = (-)-vetispiradiene + diphosphate. It participates in secondary metabolite biosynthesis; terpenoid biosynthesis. Functionally, sesquiterpene synthase that catalyzes the formation of vetispiradiene from trans,trans-farnesyl diphosphate. The initial internal cyclization produces the monocyclic intermediate germacrene A. The chain is Vetispiradiene synthase 1 (PVS1) from Solanum tuberosum (Potato).